The chain runs to 415 residues: Isocitrate dehydrogenase [NADP] (415 aa).

NADP(+) is bound by residues 77-79 and arginine 84; that span reads TIT. Threonine 79 serves as a coordination point for substrate. Residues 96–102, arginine 111, and arginine 134 contribute to the substrate site; that span reads SPNGTIR. Aspartate 254 serves as a coordination point for Mn(2+). Position 262 (lysine 262) interacts with NADP(+). Aspartate 277 provides a ligand contact to Mn(2+). Residues 312–317 and asparagine 330 contribute to the NADP(+) site; that span reads GTVTRH.

This sequence belongs to the isocitrate and isopropylmalate dehydrogenases family. In terms of assembly, heterodimer. It depends on Mg(2+) as a cofactor. Mn(2+) serves as cofactor.

It localises to the cytoplasm. It carries out the reaction D-threo-isocitrate + NADP(+) = 2-oxoglutarate + CO2 + NADPH. May supply 2-oxoglutarate for amino acid biosynthesis and ammonia assimilation via the glutamine synthetase/glutamate synthase (GS/GOGAT) pathway. The protein is Isocitrate dehydrogenase [NADP] of Nicotiana tabacum (Common tobacco).